The sequence spans 301 residues: Recombination-associated protein RdgC (301 aa).

The protein belongs to the RdgC family.

Its subcellular location is the cytoplasm. It is found in the nucleoid. Functionally, may be involved in recombination. The chain is Recombination-associated protein RdgC from Xanthomonas axonopodis pv. citri (strain 306).